Reading from the N-terminus, the 129-residue chain is Small ribosomal subunit protein uS11 (129 aa).

Belongs to the universal ribosomal protein uS11 family. In terms of assembly, part of the 30S ribosomal subunit. Interacts with proteins S7 and S18. Binds to IF-3.

Functionally, located on the platform of the 30S subunit, it bridges several disparate RNA helices of the 16S rRNA. Forms part of the Shine-Dalgarno cleft in the 70S ribosome. In Phenylobacterium zucineum (strain HLK1), this protein is Small ribosomal subunit protein uS11.